An 875-amino-acid polypeptide reads, in one-letter code: Probable ubiquitin carboxyl-terminal hydrolase 7 (875 aa).

The UBP-type zinc-finger motif lies at Lys-54 to Asn-167. Zn(2+)-binding residues include Cys-56, His-58, Cys-83, Cys-86, Cys-101, Cys-104, Cys-109, His-116, His-120, His-127, Cys-140, and Cys-143. The 668-residue stretch at Pro-208–Val-875 folds into the USP domain. Cys-217 acts as the Nucleophile in catalysis. Ser-333 and Ser-337 each carry phosphoserine. Positions Tyr-396–Ser-486 are disordered. Positions Ser-401–Ser-438 are enriched in low complexity. The segment covering Asn-473–Leu-484 has biased composition (basic and acidic residues). Phosphoserine occurs at positions 486 and 493. Over residues Arg-575–Ser-586 the composition is skewed to basic residues. The tract at residues Arg-575–Ser-628 is disordered. Over residues Gln-600–Glu-611 the composition is skewed to polar residues. Phosphoserine is present on Ser-645. His-812 serves as the catalytic Proton acceptor.

The protein belongs to the peptidase C19 family.

The enzyme catalyses Thiol-dependent hydrolysis of ester, thioester, amide, peptide and isopeptide bonds formed by the C-terminal Gly of ubiquitin (a 76-residue protein attached to proteins as an intracellular targeting signal).. This chain is Probable ubiquitin carboxyl-terminal hydrolase 7 (ubp7), found in Schizosaccharomyces pombe (strain 972 / ATCC 24843) (Fission yeast).